The sequence spans 384 residues: MSRSKRDNNFYSVEIGDSTFTVLKRYQNLKPIGSGAQGIVCAAYDAILERNVAIKKLSRPFQNQTHAKRAYRELVLMKCVNHKNIIGLLNVFTPQKSLEEFQDVYIVMELMDANLCQVIQMELDHERMSYLLYQMLCGIKHLHSAGIIHRDLKPSNIVVKSDCTLKILDFGLARTAGTSFMMTPYVVTRYYRAPEVILGMGYKENVDLWSVGCIMGEMVCHKILFPGRDYIDQWNKVIEQLGTPCPEFMKKLQPTVRTYVENRPKYAGYSFEKLFPDVLFPADSEHNKLKASQARDLLSKMLVIDASKRISVDEALQHPYINVWYDPSEAEAPPPKIPDKQLDEREHTIEEWKELIYKEVMDLEERTKNGVIRGQPSPLAQVQQ.

Residues 26–321 form the Protein kinase domain; it reads YQNLKPIGSG…VDEALQHPYI (296 aa). ATP-binding positions include 32-40 and Lys-55; that span reads IGSGAQGIV. Residue Cys-116 is modified to S-nitrosocysteine. Catalysis depends on Asp-151, which acts as the Proton acceptor. Phosphothreonine; by MAP2K7 is present on Thr-183. Positions 183-185 match the TXY motif; sequence TPY. Tyr-185 is modified (phosphotyrosine; by MAP2K4). Residue Ser-377 is modified to Phosphoserine.

It belongs to the protein kinase superfamily. CMGC Ser/Thr protein kinase family. MAP kinase subfamily. Binds to at least four scaffolding proteins, MAPK8IP1/JIP-1, MAPK8IP2/JIP-2, MAPK8IP3/JIP-3/JSAP1 and SPAG9/MAPK8IP4/JIP-4. These proteins also bind other components of the JNK signaling pathway. Forms a complex with MAPK8IP1 and ARHGEF28. Interacts with TP53 and WWOX. Interacts with JAMP. Interacts with NFATC4. Interacts with MECOM; regulates JNK signaling. Interacts with PIN1; this interaction mediates MAPK8 conformational changes leading to the binding of MAPK8 to its substrates. Interacts with HSF1 (via D domain and preferentially with hyperphosphorylated form); this interaction occurs under both normal growth conditions and immediately upon heat shock. Interacts (phosphorylated form) with NFE2; the interaction phosphorylates NFE2 in undifferentiated cells. Interacts with GRIPAP1. Interacts with POU5F1; phosphorylates POU5F1 at 'Ser-347'. Found in a complex with SH3RF1, RAC1, MAP3K11/MLK3, MAP2K7/MKK7 and MAPK8IP1/JIP1. Found in a complex with SH3RF1, RAC2, MAP3K7/TAK1, MAP2K7/MKK7, MAPK8IP1/JIP1 and MAPK9/JNK2. Mg(2+) is required as a cofactor. Post-translationally, phosphorylated by TAOK2. Dually phosphorylated on Thr-183 and Tyr-185 by MAP2K7 and MAP2K4, which activates the enzyme. May be phosphorylated at Thr-183 and Tyr-185 by MAP3K1/MEKK1. Phosphorylated form is more concentrated at synapses than none-phosphorylated. As to expression, brain (at protein level).

It localises to the cytoplasm. The protein localises to the nucleus. It is found in the synapse. The enzyme catalyses L-seryl-[protein] + ATP = O-phospho-L-seryl-[protein] + ADP + H(+). It carries out the reaction L-threonyl-[protein] + ATP = O-phospho-L-threonyl-[protein] + ADP + H(+). Its activity is regulated as follows. Inhibited by SERPINB3. Activated by threonine and tyrosine phosphorylation by either of two dual specificity kinases, MAP2K4 and MAP2K7. MAP2K4 shows a strong preference for Tyr-185 while MAP2K7 phosphorylates Tyr-183 preferentially. Inhibited by dual specificity phosphatases, such as DUSP1. Functionally, serine/threonine-protein kinase involved in various processes such as cell proliferation, differentiation, migration, transformation and programmed cell death. Extracellular stimuli such as pro-inflammatory cytokines or physical stress stimulate the stress-activated protein kinase/c-Jun N-terminal kinase (SAP/JNK) signaling pathway. In this cascade, two dual specificity kinases MAP2K4/MKK4 and MAP2K7/MKK7 phosphorylate and activate MAPK8/JNK1. In turn, MAPK8/JNK1 phosphorylates a number of transcription factors, primarily components of AP-1 such as JUN, JDP2 and ATF2 and thus regulates AP-1 transcriptional activity. Phosphorylates the replication licensing factor CDT1, inhibiting the interaction between CDT1 and the histone H4 acetylase HBO1 to replication origins. Loss of this interaction abrogates the acetylation required for replication initiation. Promotes stressed cell apoptosis by phosphorylating key regulatory factors including p53/TP53 and Yes-associates protein YAP1. In T-cells, MAPK8 and MAPK9 are required for polarized differentiation of T-helper cells into Th1 cells. Contributes to the survival of erythroid cells by phosphorylating the antagonist of cell death BAD upon EPO stimulation. Mediates starvation-induced BCL2 phosphorylation, BCL2 dissociation from BECN1, and thus activation of autophagy. Phosphorylates STMN2 and hence regulates microtubule dynamics, controlling neurite elongation in cortical neurons. In the developing brain, through its cytoplasmic activity on STMN2, negatively regulates the rate of exit from multipolar stage and of radial migration from the ventricular zone. Phosphorylates several other substrates including heat shock factor protein 4 (HSF4), the deacetylase SIRT1, ELK1, or the E3 ligase ITCH. Phosphorylates the CLOCK-BMAL1 heterodimer and plays a role in the regulation of the circadian clock. Phosphorylates the heat shock transcription factor HSF1, suppressing HSF1-induced transcriptional activity. Phosphorylates POU5F1, which results in the inhibition of POU5F1's transcriptional activity and enhances its proteasomal degradation. Phosphorylates JUND and this phosphorylation is inhibited in the presence of MEN1. In neurons, phosphorylates SYT4 which captures neuronal dense core vesicles at synapses. Phosphorylates EIF4ENIF1/4-ET in response to oxidative stress, promoting P-body assembly. Phosphorylates SIRT6 in response to oxidative stress, stimulating its mono-ADP-ribosyltransferase activity. Phosphorylates NLRP3, promoting assembly of the NLRP3 inflammasome. Phosphorylates ALKBH5 in response to reactive oxygen species (ROS), promoting ALKBH5 sumoylation and inactivation. The protein is Mitogen-activated protein kinase 8 (Mapk8) of Mus musculus (Mouse).